The sequence spans 1010 residues: Trifunctional purine biosynthetic protein adenosine-3 (1010 aa).

Ala-2 is subject to N-acetylalanine. The ATP-grasp domain occupies 111-318 (KEFMDRHGIS…LYEVIQSILD (208 aa)). ATP is bound by residues 190-193 (EELL), Glu-197, Arg-220, and Asn-229. Mg(2+) contacts are provided by Glu-288 and Asn-290. Lys-350 carries the N6-acetyllysine modification. Positions 434-809 (GLTYKESGVD…HFSVQPKKAR (376 aa)) are AIRS domain. Position 440 is a phosphoserine (Ser-440). At Thr-682 the chain carries Phosphothreonine. Ser-802 is subject to Phosphoserine. The GART domain stretch occupies residues 810-1010 (VAVLISGTGS…NGRICWVTED (201 aa)). A N(1)-(5-phospho-beta-D-ribosyl)glycinamide-binding site is contributed by 818–820 (GSN). Residues Arg-871, 896–899 (MRIL), and Asn-913 contribute to the (6R)-10-formyltetrahydrofolate site. The active-site Proton donor is His-915. Residue 947–951 (AEDVD) coordinates (6R)-10-formyltetrahydrofolate. Position 977-980 (977-980 (KLAE)) interacts with N(1)-(5-phospho-beta-D-ribosyl)glycinamide.

It in the N-terminal section; belongs to the GARS family. In the central section; belongs to the AIR synthase family. The protein in the C-terminal section; belongs to the GART family. Homodimer. Mg(2+) serves as cofactor. Requires Mn(2+) as cofactor.

It catalyses the reaction 5-phospho-beta-D-ribosylamine + glycine + ATP = N(1)-(5-phospho-beta-D-ribosyl)glycinamide + ADP + phosphate + H(+). It carries out the reaction 2-formamido-N(1)-(5-O-phospho-beta-D-ribosyl)acetamidine + ATP = 5-amino-1-(5-phospho-beta-D-ribosyl)imidazole + ADP + phosphate + H(+). The catalysed reaction is N(1)-(5-phospho-beta-D-ribosyl)glycinamide + (6R)-10-formyltetrahydrofolate = N(2)-formyl-N(1)-(5-phospho-beta-D-ribosyl)glycinamide + (6S)-5,6,7,8-tetrahydrofolate + H(+). Its pathway is purine metabolism; IMP biosynthesis via de novo pathway; 5-amino-1-(5-phospho-D-ribosyl)imidazole from N(2)-formyl-N(1)-(5-phospho-D-ribosyl)glycinamide: step 2/2. The protein operates within purine metabolism; IMP biosynthesis via de novo pathway; N(1)-(5-phospho-D-ribosyl)glycinamide from 5-phospho-alpha-D-ribose 1-diphosphate: step 2/2. It functions in the pathway purine metabolism; IMP biosynthesis via de novo pathway; N(2)-formyl-N(1)-(5-phospho-D-ribosyl)glycinamide from N(1)-(5-phospho-D-ribosyl)glycinamide (10-formyl THF route): step 1/1. In terms of biological role, trifunctional enzyme that catalyzes three distinct reactions as part of the 'de novo' inosine monophosphate biosynthetic pathway. The chain is Trifunctional purine biosynthetic protein adenosine-3 (GART) from Bos taurus (Bovine).